Here is a 160-residue protein sequence, read N- to C-terminus: Cyclic pyranopterin monophosphate synthase (160 aa).

Residues 74–76 and 112–113 contribute to the substrate site; these read LSH and ME. The active site involves Asp127.

The protein belongs to the MoaC family. As to quaternary structure, homohexamer; trimer of dimers.

It carries out the reaction (8S)-3',8-cyclo-7,8-dihydroguanosine 5'-triphosphate = cyclic pyranopterin phosphate + diphosphate. It participates in cofactor biosynthesis; molybdopterin biosynthesis. In terms of biological role, catalyzes the conversion of (8S)-3',8-cyclo-7,8-dihydroguanosine 5'-triphosphate to cyclic pyranopterin monophosphate (cPMP). The polypeptide is Cyclic pyranopterin monophosphate synthase (Geobacter sulfurreducens (strain ATCC 51573 / DSM 12127 / PCA)).